Here is a 169-residue protein sequence, read N- to C-terminus: Peptide methionine sulfoxide reductase MsrA (169 aa).

Cys-13 is a catalytic residue.

It belongs to the MsrA Met sulfoxide reductase family.

The catalysed reaction is L-methionyl-[protein] + [thioredoxin]-disulfide + H2O = L-methionyl-(S)-S-oxide-[protein] + [thioredoxin]-dithiol. It carries out the reaction [thioredoxin]-disulfide + L-methionine + H2O = L-methionine (S)-S-oxide + [thioredoxin]-dithiol. Its function is as follows. Has an important function as a repair enzyme for proteins that have been inactivated by oxidation. Catalyzes the reversible oxidation-reduction of methionine sulfoxide in proteins to methionine. This is Peptide methionine sulfoxide reductase MsrA from Mycolicibacterium vanbaalenii (strain DSM 7251 / JCM 13017 / BCRC 16820 / KCTC 9966 / NRRL B-24157 / PYR-1) (Mycobacterium vanbaalenii).